The chain runs to 560 residues: Cytosolic purine 5'-nucleotidase (560 aa).

Asp52 acts as the Nucleophile in catalysis. Asp52 and Asp54 together coordinate IMP. Mg(2+)-binding residues include Asp52 and Asp54. The Proton donor role is filled by Asp54. ATP contacts are provided by Arg144 and Asn154. Residues Arg202, Asp206, Lys215, Thr249, Asn250, Ser251, and Lys292 each coordinate IMP. Asp351 lines the Mg(2+) pocket. A Phosphoserine modification is found at Ser418. 2 residues coordinate ATP: Gln453 and Arg456. Residues Ser502, Ser511, and Ser527 each carry the phosphoserine modification. Residues 541–560 (PQEITHCHDEDDDEEEEEEE) form a disordered region. The interval 548 to 560 (HDEDDDEEEEEEE) is required for tetramer assembly. A compositionally biased stretch (acidic residues) spans 550-560 (EDDDEEEEEEE).

This sequence belongs to the 5'(3')-deoxyribonucleotidase family. As to quaternary structure, homotetramer. It depends on Mg(2+) as a cofactor.

It is found in the cytoplasm. The protein localises to the cytosol. It catalyses the reaction a ribonucleoside 5'-phosphate + H2O = a ribonucleoside + phosphate. The enzyme catalyses a 2'-deoxyribonucleoside + a ribonucleoside 5'-phosphate = a ribonucleoside + a 2'-deoxyribonucleoside 5'-phosphate. The catalysed reaction is IMP + H2O = inosine + phosphate. It carries out the reaction GMP + H2O = guanosine + phosphate. It catalyses the reaction dIMP + H2O = 2'-deoxyinosine + phosphate. The enzyme catalyses dGMP + H2O = 2'-deoxyguanosine + phosphate. The catalysed reaction is XMP + H2O = xanthosine + phosphate. It carries out the reaction inosine + GMP = guanosine + IMP. It catalyses the reaction dGMP + inosine = 2'-deoxyguanosine + IMP. The enzyme catalyses dIMP + inosine = 2'-deoxyinosine + IMP. The catalysed reaction is inosine + UMP = uridine + IMP. It carries out the reaction inosine + CMP = cytidine + IMP. It catalyses the reaction inosine + AMP = IMP + adenosine. Its activity is regulated as follows. Allosterically activated by various compounds including ATP, 2,3-BPG/2,3-Bisphosphoglyceric acid and Ap4A/P1,P4-bis(5'-adenosyl) tetraphosphate. Binding of an allosteric activator is a prerequisiste to magnesium and substrate binding. Inhibited by inorganic phosphate. Broad specificity cytosolic 5'-nucleotidase that catalyzes the dephosphorylation of 6-hydroxypurine nucleoside 5'-monophosphates. In addition, possesses a phosphotransferase activity by which it can transfer a phosphate from a donor nucleoside monophosphate to an acceptor nucleoside, preferably inosine, deoxyinosine and guanosine. Has the highest activities for IMP and GMP followed by dIMP, dGMP and XMP. Could also catalyze the transfer of phosphates from pyrimidine monophosphates but with lower efficiency. Through these activities regulates the purine nucleoside/nucleotide pools within the cell. The chain is Cytosolic purine 5'-nucleotidase from Bos taurus (Bovine).